The following is a 368-amino-acid chain: High affinity iron permease 1 (368 aa).

7 helical membrane-spanning segments follow: residues 8-28, 50-70, 86-106, 142-162, 173-193, 204-224, and 287-307; these read VPIF…ISVL, VWIG…AFIA, IWEG…GLAM, AFFV…VVFI, SIPI…FLIY, FFVF…AKGV, and SIIS…FSYF. A disordered region spans residues 346–368; sequence DKESDEEANNHPKEKIESDAIKA. Basic and acidic residues predominate over residues 353–368; the sequence is ANNHPKEKIESDAIKA.

The protein belongs to the oxidase-dependent Fe transporter (OFeT) (TC 9.A.10.1) family.

The protein resides in the cell membrane. Functionally, high affinity iron permease required for iron uptake in iron-depleted environments. Required for full virulence in mice. The chain is High affinity iron permease 1 from Rhizopus delemar (strain RA 99-880 / ATCC MYA-4621 / FGSC 9543 / NRRL 43880) (Mucormycosis agent).